We begin with the raw amino-acid sequence, 712 residues long: DNA ligase (712 aa).

Low complexity predominate over residues 1–22 (MSTQYDSDSSPAASNSGSADPA). Residues 1–23 (MSTQYDSDSSPAASNSGSADPAL) are disordered. Residue 53 to 57 (DAEFD) participates in NAD(+) binding. The segment at 69-93 (SHPEAVTGPSPTTEVAPSPPESSPF) is disordered. NAD(+)-binding positions include 104–105 (SL) and Glu-129. Catalysis depends on Lys-131, which acts as the N6-AMP-lysine intermediate. Residues Arg-152, Glu-192, Lys-308, and Lys-332 each coordinate NAD(+). Residues Cys-426, Cys-429, Cys-445, and Cys-451 each contribute to the Zn(2+) site. The BRCT domain occupies 624–712 (IQADLLAGLS…GPGKGDAEED (89 aa)).

Belongs to the NAD-dependent DNA ligase family. LigA subfamily. Mg(2+) serves as cofactor. Mn(2+) is required as a cofactor.

It catalyses the reaction NAD(+) + (deoxyribonucleotide)n-3'-hydroxyl + 5'-phospho-(deoxyribonucleotide)m = (deoxyribonucleotide)n+m + AMP + beta-nicotinamide D-nucleotide.. In terms of biological role, DNA ligase that catalyzes the formation of phosphodiester linkages between 5'-phosphoryl and 3'-hydroxyl groups in double-stranded DNA using NAD as a coenzyme and as the energy source for the reaction. It is essential for DNA replication and repair of damaged DNA. The chain is DNA ligase from Corynebacterium urealyticum (strain ATCC 43042 / DSM 7109).